A 261-amino-acid polypeptide reads, in one-letter code: Oligodendrocyte transcription factor 1 (261 aa).

A disordered region spans residues 41 to 105 (PPISSSSSTS…LRRKINSRER (65 aa)). Positions 44–56 (SSSSSTSSSSTAS) are enriched in low complexity. Residues 95-154 (QLRRKINSRERKRMQDLNLAMDALREVILPYSAAHCQGAPGRKLSKIATLLLARNYILLL) enclose the bHLH domain.

In terms of tissue distribution, expressed specifically in the brain, including the corpus callosum, hippocampal and cerebral white matter. Also detected in cells scattered in gray matter, most probably in oligodendrocytes.

It localises to the nucleus. Functionally, promotes formation and maturation of oligodendrocytes, especially within the brain. Cooperates with OLIG2 to establish the pMN domain of the embryonic neural tube. The polypeptide is Oligodendrocyte transcription factor 1 (Olig1) (Rattus norvegicus (Rat)).